Consider the following 314-residue polypeptide: Dihydroorotate dehydrogenase (fumarate) (314 aa).

Residues Lys-46, 70–74 (NSMGL), and Asn-130 contribute to the substrate site. Residue Lys-46 forms a Glycyl lysine isopeptide (Lys-Gly) (interchain with G-Cter in ubiquitin) linkage. 46 to 47 (KS) is an FMN binding site. Asn-130 lines the FMN pocket. Catalysis depends on Cys-133, which acts as the Nucleophile. Residues Lys-167 and Ile-195 each coordinate FMN. Substrate is bound at residue 196-197 (NS). FMN is bound by residues Gly-224, 252-253 (GG), and 274-275 (GT).

This sequence belongs to the dihydroorotate dehydrogenase family. Type 1 subfamily. Homodimer. FMN is required as a cofactor.

It localises to the cytoplasm. The catalysed reaction is (S)-dihydroorotate + fumarate = orotate + succinate. Its pathway is pyrimidine metabolism; UMP biosynthesis via de novo pathway. With respect to regulation, the activity is independent of the presence of oxygen. Functionally, catalyzes the conversion of dihydroorotate to orotate with fumarate as the electron acceptor. Molecular oxygen can replace fumarate in vitro. Does not use oxaloacetate or NAD or NADP as electron acceptors. In Saccharomyces cerevisiae (strain ATCC 204508 / S288c) (Baker's yeast), this protein is Dihydroorotate dehydrogenase (fumarate) (URA1).